A 286-amino-acid chain; its full sequence is 4-hydroxybenzoate octaprenyltransferase (286 aa).

7 helical membrane passes run I20–M40, P43–I63, L83–C103, F135–F155, G160–Y180, V209–L229, and I234–I254.

This sequence belongs to the UbiA prenyltransferase family. Requires Mg(2+) as cofactor.

It is found in the cell inner membrane. The enzyme catalyses all-trans-octaprenyl diphosphate + 4-hydroxybenzoate = 4-hydroxy-3-(all-trans-octaprenyl)benzoate + diphosphate. It functions in the pathway cofactor biosynthesis; ubiquinone biosynthesis. Its function is as follows. Catalyzes the prenylation of para-hydroxybenzoate (PHB) with an all-trans polyprenyl group. Mediates the second step in the final reaction sequence of ubiquinone-8 (UQ-8) biosynthesis, which is the condensation of the polyisoprenoid side chain with PHB, generating the first membrane-bound Q intermediate 3-octaprenyl-4-hydroxybenzoate. In Nitrosomonas eutropha (strain DSM 101675 / C91 / Nm57), this protein is 4-hydroxybenzoate octaprenyltransferase.